The primary structure comprises 360 residues: Ribosomal RNA large subunit methyltransferase F (360 aa).

The interval 1-38 is disordered; it reads MTRSTTPPMRAKHSSAKRSPSRSAAKVNPVSVKPNKPL. Over residues 10-20 the composition is skewed to basic residues; that stretch reads RAKHSSAKRSP.

This sequence belongs to the methyltransferase superfamily. METTL16/RlmF family.

It localises to the cytoplasm. The catalysed reaction is adenosine(1618) in 23S rRNA + S-adenosyl-L-methionine = N(6)-methyladenosine(1618) in 23S rRNA + S-adenosyl-L-homocysteine + H(+). In terms of biological role, specifically methylates the adenine in position 1618 of 23S rRNA. The chain is Ribosomal RNA large subunit methyltransferase F from Shewanella frigidimarina (strain NCIMB 400).